The primary structure comprises 631 residues: Nucleoside triphosphatase I (631 aa).

Positions F42–G204 constitute a Helicase ATP-binding domain. H55 to T62 is an ATP binding site. A DEXH box motif is present at residues D141–H144. A Helicase C-terminal domain is found at K367–K532.

This sequence belongs to the helicase family. NPH I subfamily. In terms of assembly, monomer.

It carries out the reaction a ribonucleoside 5'-triphosphate + H2O = a ribonucleoside 5'-diphosphate + phosphate + H(+). Its function is as follows. Serves two roles in transcription; it acts in concert with viral termination factor/capping enzyme to catalyze release of UUUUUNU-containing nascent RNA from the elongation complex, and it acts by itself as a polymerase elongation factor to facilitate readthrough of intrinsic pause sites. The protein is Nucleoside triphosphatase I (NPH1) of Homo sapiens (Human).